The sequence spans 227 residues: A-type potassium channel modulatory protein KCNIP1 (227 aa).

One can recognise an EF-hand 1; degenerate domain in the interval 38 to 94; sequence LEMTMVCHRPEGLEQLEAQTNFTKRELQVLYRGFKNECPSGVVNEETFKQIYAQFFP. EF-hand domains lie at 97–132, 133–168, and 181–216; these read DAST…LLRG, TVHE…IYDM, and TPRQ…DDNI. The Ca(2+) site is built by Asp146, Asn148, Asp150, Tyr152, Glu157, Asp194, Asn196, Asp198, and Glu205. The interval 214-227 is interaction with KCND2; that stretch reads DNIMRSLQLFQNVM.

Belongs to the recoverin family. Component of heteromultimeric potassium channels. Identified in potassium channel complexes containing KCND1, KCND2, KCND3, KCNIP1, KCNIP2, KCNIP3, KCNIP4, DPP6 and DPP10. Part of a heterooctamer composed of the tetrameric channel and four KCNIP1 chains. Probably part of a complex consisting of KCNIP1, KCNIP2 isoform 3 and KCND2. Self-associates to form homodimers and homotetramers. Interacts with KCNIP2 isoform 3 in a calcium-dependent manner. Interacts with KCND2; this interaction mediates the capture of both the N- and C-terminus of KCND2, thus preventing KCND2 N-type inactivation and modulates the channel gating kinetics. Interacts with KCND3; each KCNIP1 monomer interacts with two adjacent KCND3 subunits, through both the N-terminal inactivation ball of a KCND3 subunit and a C-terminal helix from the adjacent KCND3 subunit, clamping them together; this interaction stabilizes the tetrameric form and modulates the channel gating kinetics namely channel activation and inactivation kinetics and rate of recovery from inactivation. In terms of tissue distribution, detected in hippocampus and in the molecular layer of the dentate gyrus (at protein level). Isoform 1 and isoform 2 are predominantly expressed at equal levels in brain. Colocalizes with KCND3 in inhibitory interneurons in cortex and hippocampus and in striatal interneurons.

The protein localises to the cell membrane. Its subcellular location is the cytoplasm. It is found in the cell projection. The protein resides in the dendrite. Regulatory subunit of Kv4/D (Shal)-type voltage-gated rapidly inactivating A-type potassium channels. Regulates channel density, inactivation kinetics and rate of recovery from inactivation in a calcium-dependent and isoform-specific manner. Modulates KCND2/Kv4.2 currents. In vitro, modulates KCND1/Kv4.1 currents. Increases the presence of KCND2 at the cell surface. The protein is A-type potassium channel modulatory protein KCNIP1 of Rattus norvegicus (Rat).